The following is a 121-amino-acid chain: Spermidine export protein MdtJ (121 aa).

M1 is a topological domain (cytoplasmic). A helical membrane pass occupies residues 2–22 (YIYWILLGLAVATEITGTLSM). The Periplasmic segment spans residues 23-31 (KWASVSEGN). Residues 32–52 (GGFILMLVMISLSYIFLSFAV) form a helical membrane-spanning segment. Residues 53-54 (KK) lie on the Cytoplasmic side of the membrane. Residues 55 to 75 (IALGVAYALWEGIGILFITLF) traverse the membrane as a helical segment. Residues 76 to 81 (SVLLFD) lie on the Periplasmic side of the membrane. The chain crosses the membrane as a helical span at residues 82–102 (ESLSLMKIAGLTTLVAGIVLI). Over 103–121 (KSGTRKARKPELEVNHGAV) the chain is Cytoplasmic.

Belongs to the drug/metabolite transporter (DMT) superfamily. Small multidrug resistance (SMR) (TC 2.A.7.1) family. MdtJ subfamily. Forms a complex with MdtI.

It is found in the cell inner membrane. In terms of biological role, catalyzes the excretion of spermidine. This Escherichia coli O6:H1 (strain CFT073 / ATCC 700928 / UPEC) protein is Spermidine export protein MdtJ (mdtJ).